The sequence spans 329 residues: MTEFIPFIILIGVAFVILSIILSFVPVGLWITAQFSGVKVGIFTLVGMRFRRVQPIRIINPLIKATKAGIDINIDKLEAHYLAGGDVNTLVDALIAAQRAEINLPFERAAAIDLAGRQVLEAVQVSVNPKVIETPKIAAVAKDGIEVMARARVTVRANIERLVGGAGEETIIARVGEGIVTTVGSATTHKHVLENPDMISKTVLSKGLDAGTAYEILSIDIADIDIGRNIGAQLQTDQADADKRIAQAKAEERRAMAVAKEQEMKAAVQEMRAKVVEAEAEVPKALATALREGKMGVMDYYNMKNIMADTDMRDSISKVAPNEKKYEEE.

2 helical membrane-spanning segments follow: residues 4 to 24 (FIPFIILIGVAFVILSIILSF) and 27 to 47 (VGLWITAQFSGVKVGIFTLVG).

Belongs to the flotillin-like FloA family. As to quaternary structure, homooligomerizes.

The protein localises to the cell membrane. The protein resides in the membrane raft. In terms of biological role, found in functional membrane microdomains (FMM) that may be equivalent to eukaryotic membrane rafts. FMMs are highly dynamic and increase in number as cells age. Flotillins are thought to be important factors in membrane fluidity. The chain is Flotillin-like protein FloA from Alkaliphilus metalliredigens (strain QYMF).